The chain runs to 417 residues: Serine hydroxymethyltransferase (417 aa).

(6S)-5,6,7,8-tetrahydrofolate contacts are provided by residues Leu-121 and 125–127; that span reads GHL. The residue at position 229 (Lys-229) is an N6-(pyridoxal phosphate)lysine. 355-357 contributes to the (6S)-5,6,7,8-tetrahydrofolate binding site; the sequence is SPF.

It belongs to the SHMT family. In terms of assembly, homodimer. Pyridoxal 5'-phosphate is required as a cofactor.

Its subcellular location is the cytoplasm. The catalysed reaction is (6R)-5,10-methylene-5,6,7,8-tetrahydrofolate + glycine + H2O = (6S)-5,6,7,8-tetrahydrofolate + L-serine. Its pathway is one-carbon metabolism; tetrahydrofolate interconversion. It functions in the pathway amino-acid biosynthesis; glycine biosynthesis; glycine from L-serine: step 1/1. Its function is as follows. Catalyzes the reversible interconversion of serine and glycine with tetrahydrofolate (THF) serving as the one-carbon carrier. This reaction serves as the major source of one-carbon groups required for the biosynthesis of purines, thymidylate, methionine, and other important biomolecules. Also exhibits THF-independent aldolase activity toward beta-hydroxyamino acids, producing glycine and aldehydes, via a retro-aldol mechanism. The chain is Serine hydroxymethyltransferase from Aeromonas salmonicida (strain A449).